The following is a 1032-amino-acid chain: Protein translocase subunit SecA (1032 aa).

Residues glutamine 121, 139 to 143 (GEGKT), and aspartate 570 contribute to the ATP site. Residues 945 to 975 (TAGGSENATEDAPKPAKRGVGGAARRVSNAA) are disordered. Cysteine 994, cysteine 996, cysteine 1005, and histidine 1006 together coordinate Zn(2+).

This sequence belongs to the SecA family. Monomer and homodimer. Part of the essential Sec protein translocation apparatus which comprises SecA, SecYEG and auxiliary proteins SecDF. Other proteins may also be involved. The cofactor is Zn(2+).

The protein localises to the cell membrane. It is found in the cytoplasm. It catalyses the reaction ATP + H2O + cellular proteinSide 1 = ADP + phosphate + cellular proteinSide 2.. Its function is as follows. Part of the Sec protein translocase complex. Interacts with the SecYEG preprotein conducting channel. Has a central role in coupling the hydrolysis of ATP to the transfer of proteins into and across the cell membrane, serving as an ATP-driven molecular motor driving the stepwise translocation of polypeptide chains across the membrane. This is Protein translocase subunit SecA from Herpetosiphon aurantiacus (strain ATCC 23779 / DSM 785 / 114-95).